Reading from the N-terminus, the 58-residue chain is Small ribosomal subunit protein bS21 (58 aa).

The segment at 36–58 is disordered; the sequence is EHYEKPSVKRKKKSEAARRRKYR. The segment covering 43 to 58 has biased composition (basic residues); that stretch reads VKRKKKSEAARRRKYR.

It belongs to the bacterial ribosomal protein bS21 family.

This chain is Small ribosomal subunit protein bS21, found in Symbiobacterium thermophilum (strain DSM 24528 / JCM 14929 / IAM 14863 / T).